A 336-amino-acid polypeptide reads, in one-letter code: Dihydroorotate dehydrogenase (quinone) (336 aa).

FMN is bound by residues 62 to 66 (AGLDK) and T86. Residue K66 participates in substrate binding. A substrate-binding site is contributed by 111 to 115 (NRMGF). FMN-binding residues include N139 and N172. A substrate-binding site is contributed by N172. Residue S175 is the Nucleophile of the active site. N177 provides a ligand contact to substrate. Residues K217 and T245 each coordinate FMN. 246 to 247 (NT) serves as a coordination point for substrate. Residues G268, G297, and 318–319 (YS) contribute to the FMN site.

It belongs to the dihydroorotate dehydrogenase family. Type 2 subfamily. Monomer. The cofactor is FMN.

It is found in the cell membrane. It carries out the reaction (S)-dihydroorotate + a quinone = orotate + a quinol. Its pathway is pyrimidine metabolism; UMP biosynthesis via de novo pathway; orotate from (S)-dihydroorotate (quinone route): step 1/1. In terms of biological role, catalyzes the conversion of dihydroorotate to orotate with quinone as electron acceptor. This chain is Dihydroorotate dehydrogenase (quinone), found in Aliivibrio fischeri (strain MJ11) (Vibrio fischeri).